Consider the following 195-residue polypeptide: Peptidyl-tRNA hydrolase (195 aa).

Y17 provides a ligand contact to tRNA. Catalysis depends on H22, which acts as the Proton acceptor. TRNA is bound by residues F68, N70, and N116.

The protein belongs to the PTH family. Monomer.

Its subcellular location is the cytoplasm. It carries out the reaction an N-acyl-L-alpha-aminoacyl-tRNA + H2O = an N-acyl-L-amino acid + a tRNA + H(+). Its function is as follows. Hydrolyzes ribosome-free peptidyl-tRNAs (with 1 or more amino acids incorporated), which drop off the ribosome during protein synthesis, or as a result of ribosome stalling. In terms of biological role, catalyzes the release of premature peptidyl moieties from peptidyl-tRNA molecules trapped in stalled 50S ribosomal subunits, and thus maintains levels of free tRNAs and 50S ribosomes. This is Peptidyl-tRNA hydrolase from Shewanella loihica (strain ATCC BAA-1088 / PV-4).